The chain runs to 68 residues: Large ribosomal subunit protein uL29 (68 aa).

The protein belongs to the universal ribosomal protein uL29 family.

The chain is Large ribosomal subunit protein uL29 (rpl29) from Pyrococcus horikoshii (strain ATCC 700860 / DSM 12428 / JCM 9974 / NBRC 100139 / OT-3).